The chain runs to 426 residues: Enolase (426 aa).

Gln-163 is a (2R)-2-phosphoglycerate binding site. The active-site Proton donor is the Glu-205. Mg(2+) contacts are provided by Asp-242, Glu-286, and Asp-313. Residues Lys-338, Arg-367, Ser-368, and Lys-389 each contribute to the (2R)-2-phosphoglycerate site. The Proton acceptor role is filled by Lys-338.

Belongs to the enolase family. Mg(2+) serves as cofactor.

Its subcellular location is the cytoplasm. It is found in the secreted. It localises to the cell surface. It catalyses the reaction (2R)-2-phosphoglycerate = phosphoenolpyruvate + H2O. It participates in carbohydrate degradation; glycolysis; pyruvate from D-glyceraldehyde 3-phosphate: step 4/5. Catalyzes the reversible conversion of 2-phosphoglycerate (2-PG) into phosphoenolpyruvate (PEP). It is essential for the degradation of carbohydrates via glycolysis. The sequence is that of Enolase from Helicobacter pylori (strain HPAG1).